The chain runs to 953 residues: Isoleucine--tRNA ligase (953 aa).

Positions 57 to 67 (PYANGDIHIGH) match the 'HIGH' region motif. Glutamate 582 contributes to the L-isoleucyl-5'-AMP binding site. Residues 623 to 627 (KMSKS) carry the 'KMSKS' region motif. Lysine 626 contributes to the ATP binding site. 4 residues coordinate Zn(2+): cysteine 916, cysteine 919, cysteine 936, and cysteine 939.

This sequence belongs to the class-I aminoacyl-tRNA synthetase family. IleS type 1 subfamily. Monomer. Zn(2+) is required as a cofactor.

Its subcellular location is the cytoplasm. It carries out the reaction tRNA(Ile) + L-isoleucine + ATP = L-isoleucyl-tRNA(Ile) + AMP + diphosphate. Its function is as follows. Catalyzes the attachment of isoleucine to tRNA(Ile). As IleRS can inadvertently accommodate and process structurally similar amino acids such as valine, to avoid such errors it has two additional distinct tRNA(Ile)-dependent editing activities. One activity is designated as 'pretransfer' editing and involves the hydrolysis of activated Val-AMP. The other activity is designated 'posttransfer' editing and involves deacylation of mischarged Val-tRNA(Ile). The polypeptide is Isoleucine--tRNA ligase (Bordetella petrii (strain ATCC BAA-461 / DSM 12804 / CCUG 43448)).